The chain runs to 695 residues: Translation initiation factor IF-2 (695 aa).

Residues Lys60–Pro92 form a disordered region. One can recognise a tr-type G domain in the interval Gln184–Thr358. Positions Gly193–Thr200 are G1. Gly193–Thr200 is a GTP binding site. The interval Gly218–Ser222 is G2. The tract at residues Asp239–Gly242 is G3. GTP is bound by residues Asp239 to His243 and Asn293 to Asp296. Positions Asn293–Asp296 are G4. Positions Ser330–Lys332 are G5.

Belongs to the TRAFAC class translation factor GTPase superfamily. Classic translation factor GTPase family. IF-2 subfamily.

The protein localises to the cytoplasm. One of the essential components for the initiation of protein synthesis. Protects formylmethionyl-tRNA from spontaneous hydrolysis and promotes its binding to the 30S ribosomal subunits. Also involved in the hydrolysis of GTP during the formation of the 70S ribosomal complex. In Kosmotoga olearia (strain ATCC BAA-1733 / DSM 21960 / TBF 19.5.1), this protein is Translation initiation factor IF-2.